A 217-amino-acid polypeptide reads, in one-letter code: Putative 3-methyladenine DNA glycosylase (217 aa).

The 41-residue stretch at 105-145 (SHNNVYTIDTAKIKSQITDEKTQSIIIRKNRRIMKFYIPNL) folds into the RPE2 insert domain.

This sequence belongs to the DNA glycosylase MPG family.

The polypeptide is Putative 3-methyladenine DNA glycosylase (Rickettsia prowazekii (strain Madrid E)).